The primary structure comprises 294 residues: MTGPSVHDRALGAFLGLAVGDALGATVEFMTKGEIAQQYGIHRKMTGGGWLRLKPGQITDDTEMSLALGRSLAAKGTLDVADICEEFALWLKSRPVDVGNTCRRGIRRYMHEGTTTAPYSEGDAGNGAAMRCLPAALATLGHPADLEPWVLAQARITHNHPLSDAACLTLGRMVHHLIGGRGMKACREEANRLVHQHRDFHFEPYKGQSSAYIVDTMQTVLHYYFVTDTFKSCLIQTVNQGGDADTTGALAGMLAGATYGVDDIPSGWLSKLDMKVEREIRRQVDALLALAGLD.

ADP-D-ribose contacts are provided by residues 100 to 102 (NTC), Glu-121, His-158, and Tyr-212. Mn(2+) is bound by residues Asp-243, Asp-245, and Thr-246.

The protein belongs to the ADP-ribosylglycohydrolase family. Monomer. The cofactor is Mn(2+).

The protein localises to the cytoplasm. The enzyme catalyses N(omega)-alpha-(ADP-D-ribosyl)-L-arginyl-[dinitrogen reductase] + H2O = L-arginyl-[dinitrogen reductase] + ADP-D-ribose. Its function is as follows. Involved in the regulation of nitrogen fixation activity by the reversible ADP-ribosylation of one subunit of the homodimeric dinitrogenase reductase component of the nitrogenase enzyme complex. The ADP-ribosyltransferase (DraT) transfers the ADP-ribose group from NAD to dinitrogenase reductase. The ADP-ribose group is removed through the action of the ADP-ribosylglycohydrolase (DraG, this entry). The chain is ADP-ribosyl-[dinitrogen reductase] glycohydrolase from Rhodospirillum rubrum.